Consider the following 73-residue polypeptide: Metallothionein-like protein type 2 (73 aa).

It belongs to the metallothionein superfamily. Type 15 family.

In terms of biological role, metallothioneins have a high content of cysteine residues that bind various heavy metals. The chain is Metallothionein-like protein type 2 from Solanum lycopersicum (Tomato).